We begin with the raw amino-acid sequence, 335 residues long: S-adenosylmethionine:tRNA ribosyltransferase-isomerase (335 aa).

Belongs to the QueA family. In terms of assembly, monomer.

Its subcellular location is the cytoplasm. It carries out the reaction 7-aminomethyl-7-carbaguanosine(34) in tRNA + S-adenosyl-L-methionine = epoxyqueuosine(34) in tRNA + adenine + L-methionine + 2 H(+). It functions in the pathway tRNA modification; tRNA-queuosine biosynthesis. Its function is as follows. Transfers and isomerizes the ribose moiety from AdoMet to the 7-aminomethyl group of 7-deazaguanine (preQ1-tRNA) to give epoxyqueuosine (oQ-tRNA). This chain is S-adenosylmethionine:tRNA ribosyltransferase-isomerase, found in Thermosipho africanus (strain TCF52B).